We begin with the raw amino-acid sequence, 762 residues long: Endothelin-converting enzyme 1 (762 aa).

The Cytoplasmic portion of the chain corresponds to 1 to 60; the sequence is MGSLRPPQGLGLQWSSFFLGKKGPGLTVSLPLLASSLQVNFRSPRSGQRCWAARTSVEKR. The chain crosses the membrane as a helical; Signal-anchor for type II membrane protein span at residues 61–81; it reads LVVLVTLLAAGLVACLAALGI. Residues 82 to 762 lie on the Extracellular side of the membrane; it reads QYRTRTPPVC…MNPRHKCEVW (681 aa). In terms of domain architecture, Peptidase M13 spans 90–762; the sequence is VCLTEACVSV…MNPRHKCEVW (673 aa). 5 disulfide bridges follow: C91/C96, C114/C747, C122/C707, C177/C427, and C636/C759. 8 N-linked (GlcNAc...) asparagine glycosylation sites follow: N158, N179, N202, N262, N308, N354, N375, and N531. H599 contacts Zn(2+). The active site involves E600. H603 is a binding site for Zn(2+). Residues N624 and N643 are each glycosylated (N-linked (GlcNAc...) asparagine). Zn(2+) is bound at residue E659. The active-site Proton donor is D663.

The protein belongs to the peptidase M13 family. Homodimer; disulfide-linked. Interacts with PPP1R16B. Interacts with TSPAN8; this interaction recruits the endothelin converting enzyme ECE1 to tetraspanin-enriched microdomains and positively modulates its enzymatic activity. The cofactor is Zn(2+). As to expression, all isoforms are expressed in aortic endothelial cells. Isoform A is also expressed in liver; isoform B in smooth muscle cells and fibroblasts; isoform C in aortic endothelial cells, smooth muscle cells, fibroblasts, liver and lung, and isoform D in smooth muscle cells.

Its subcellular location is the cell membrane. It catalyses the reaction Hydrolysis of the 21-Trp-|-Val-22 bond in big endothelin to form endothelin 1.. With respect to regulation, inhibited by phosphoramidon. Its function is as follows. Converts big endothelin-1 to endothelin-1. The sequence is that of Endothelin-converting enzyme 1 (Ece1) from Rattus norvegicus (Rat).